A 318-amino-acid chain; its full sequence is tRNA pseudouridine synthase B (318 aa).

Asp54 acts as the Nucleophile in catalysis.

It belongs to the pseudouridine synthase TruB family. Type 1 subfamily.

It carries out the reaction uridine(55) in tRNA = pseudouridine(55) in tRNA. Functionally, responsible for synthesis of pseudouridine from uracil-55 in the psi GC loop of transfer RNAs. In Ralstonia pickettii (strain 12J), this protein is tRNA pseudouridine synthase B.